Here is a 234-residue protein sequence, read N- to C-terminus: Leucyl/phenylalanyl-tRNA--protein transferase (234 aa).

The protein belongs to the L/F-transferase family.

It is found in the cytoplasm. It catalyses the reaction N-terminal L-lysyl-[protein] + L-leucyl-tRNA(Leu) = N-terminal L-leucyl-L-lysyl-[protein] + tRNA(Leu) + H(+). It carries out the reaction N-terminal L-arginyl-[protein] + L-leucyl-tRNA(Leu) = N-terminal L-leucyl-L-arginyl-[protein] + tRNA(Leu) + H(+). The catalysed reaction is L-phenylalanyl-tRNA(Phe) + an N-terminal L-alpha-aminoacyl-[protein] = an N-terminal L-phenylalanyl-L-alpha-aminoacyl-[protein] + tRNA(Phe). Its function is as follows. Functions in the N-end rule pathway of protein degradation where it conjugates Leu, Phe and, less efficiently, Met from aminoacyl-tRNAs to the N-termini of proteins containing an N-terminal arginine or lysine. The protein is Leucyl/phenylalanyl-tRNA--protein transferase of Shigella dysenteriae serotype 1 (strain Sd197).